The sequence spans 264 residues: 3-methyl-2-oxobutanoate hydroxymethyltransferase (264 aa).

Mg(2+) contacts are provided by aspartate 45 and aspartate 84. 3-methyl-2-oxobutanoate-binding positions include aspartate 45–serine 46, aspartate 84, and lysine 113. A Mg(2+)-binding site is contributed by glutamate 115. Catalysis depends on glutamate 182, which acts as the Proton acceptor.

The protein belongs to the PanB family. In terms of assembly, homodecamer; pentamer of dimers. The cofactor is Mg(2+).

The protein resides in the cytoplasm. It catalyses the reaction 3-methyl-2-oxobutanoate + (6R)-5,10-methylene-5,6,7,8-tetrahydrofolate + H2O = 2-dehydropantoate + (6S)-5,6,7,8-tetrahydrofolate. Its pathway is cofactor biosynthesis; (R)-pantothenate biosynthesis; (R)-pantoate from 3-methyl-2-oxobutanoate: step 1/2. Its function is as follows. Catalyzes the reversible reaction in which hydroxymethyl group from 5,10-methylenetetrahydrofolate is transferred onto alpha-ketoisovalerate to form ketopantoate. This Nitrosococcus oceani (strain ATCC 19707 / BCRC 17464 / JCM 30415 / NCIMB 11848 / C-107) protein is 3-methyl-2-oxobutanoate hydroxymethyltransferase.